Consider the following 542-residue polypeptide: Chitinase 1 (542 aa).

Positions 68 to 506 constitute a GH18 domain; that stretch reads FNVLCYFTDW…NAAHEGLKRR (439 aa). Chitin-binding positions include 186–187 and 213–216; these read QE and GGWS. Glu-256 (proton donor) is an active-site residue. Chitin contacts are provided by residues Tyr-257, 323–326, and Trp-486; that span reads MTYD.

The protein belongs to the glycosyl hydrolase 18 family. Semipurified toxin complex consists of at least YenA1-YenA2-YenB-YenC1-YenC2-Chi1-Chi2. The Yen-TC:K9 subcomplex is about 26 nm tall and 22 nm in diameter with 5-fold symmetry and 5 copies of YenA1, YenA2, Chi1 and Chi2; the chitinase subunits may be solvent accessible on the exterior the complex. The Yen-TC:K9 subcomplex has no insecticidal activity. The native complex with additional YenB, YenC1 and YenC2 subunits is 16 nm taller and is insecticidal; the toxicity-conferring subunits are present at about 1 copy each.

The protein resides in the secreted. It catalyses the reaction Random endo-hydrolysis of N-acetyl-beta-D-glucosaminide (1-&gt;4)-beta-linkages in chitin and chitodextrins.. With respect to regulation, toxin complex is secreted when grown at 25 degrees Celsius or less; at higher temperatures the proteins are present intracellularly but not secreted. In terms of biological role, part of an orally active toxin complex (TC) with strong insecticidal effects on larvae of the Coleoptera Costelytra zealandica, Acrossidius tasmania and Adoryphorus couloni and some Lepidoptera larvae. The TC has an endochitinase activity. This subunit might aid infection by degradation of the larval peritrophic membrane. The polypeptide is Chitinase 1 (Yersinia entomophaga).